Reading from the N-terminus, the 223-residue chain is Cytotoxic T-lymphocyte protein 4 (223 aa).

A signal peptide spans 1–35 (MACLGLRRYKAQLQLPSRTWPFVALLTLLFIPVFS). The Ig-like V-type domain maps to 36–145 (EAIQVTQPSV…PPPYFVGMGN (110 aa)). Topologically, residues 36–161 (EAIQVTQPSV…IDPEPCPDSD (126 aa)) are extracellular. Residues 46-50 (VLASS) form a homodimerization region. 2 disulfides stabilise this stretch: Cys58/Cys129 and Cys85/Cys103. N-linked (GlcNAc...) asparagine glycans are attached at residues Asn108 and Asn113. The tract at residues 134 to 139 (MYPPPY) is important for interaction with CD80 and CD86. The N-linked (GlcNAc...) asparagine glycan is linked to Asn145. The interval 150-155 (YVIDPE) is homodimerization. A helical membrane pass occupies residues 162–182 (FLLWILVAVSLGLFFYSFLVS). The Cytoplasmic portion of the chain corresponds to 183–223 (AVSLSKMLKKRSPLTTGVYVKMPPTEPECEKQFQPYFIPIN). A Phosphotyrosine; by TXK and JAK2 modification is found at Tyr201.

As to quaternary structure, homodimer; disulfide-linked. Binds to CD80/B7-1 and CD86/B7.2. Interacts with ICOSLG. In terms of processing, N-glycosylation is important for dimerization. Post-translationally, phosphorylation at Tyr-201 prevents binding to the AP-2 adapter complex, blocks endocytosis, and leads to retention of CTLA4 on the cell surface. In terms of tissue distribution, widely expressed with highest levels in lymphoid tissues.

The protein resides in the cell membrane. Functionally, inhibitory receptor acting as a major negative regulator of T-cell responses. The affinity of CTLA4 for its natural B7 family ligands, CD80 and CD86, is considerably stronger than the affinity of their cognate stimulatory coreceptor CD28. The polypeptide is Cytotoxic T-lymphocyte protein 4 (Ctla4) (Mus musculus (Mouse)).